A 77-amino-acid polypeptide reads, in one-letter code: Conotoxin ArMKLT2-0122 (77 aa).

An N-terminal signal peptide occupies residues 1–22 (MKLTCVLIVAVLFLTACQLIAA). A propeptide spanning residues 23 to 44 (DDSRDLKRFSRRKMRDGMLNTK) is cleaved from the precursor. 3 cysteine pairs are disulfide-bonded: cysteine 50–cysteine 65, cysteine 57–cysteine 68, and cysteine 64–cysteine 73.

It belongs to the conotoxin O1 superfamily. As to expression, expressed by the venom duct.

The protein localises to the secreted. The polypeptide is Conotoxin ArMKLT2-0122 (Conus arenatus (Sand-dusted cone)).